A 248-amino-acid chain; its full sequence is MSFTMREMLEAGVHFGHQTRFWNPKMAPYIFGHRNKIHIINLEKTVPLFNEATKYARQLAGKRGTILFVGTKRQARDVVAMEAARAGMPFVETRWLGGMLTNFKTVKGSLKKLKEMQAQVEAGTQPAIKKEALMFQREIAKLEKDIGGIQDMNALPDALFVIDVGFHKIAIAEAKKLGIPVIGVVDTNHSPVGIDYVIPGNDDSAKAVALYARVMADAIIEGKANSLNEVVEAAAGASDEFVEVSDPA.

The protein belongs to the universal ribosomal protein uS2 family.

In Leptothrix cholodnii (strain ATCC 51168 / LMG 8142 / SP-6) (Leptothrix discophora (strain SP-6)), this protein is Small ribosomal subunit protein uS2.